Here is an 88-residue protein sequence, read N- to C-terminus: L-amino-acid oxidase (88 aa).

FAD is bound by residues glutamate 74 and 81 to 86 (GWIDST). 81–82 (GW) provides a ligand contact to substrate.

Belongs to the flavin monoamine oxidase family. FIG1 subfamily. In terms of assembly, homodimer; non-covalently linked. Requires FAD as cofactor. In terms of processing, N-glycosylated. Expressed by the venom gland.

It is found in the secreted. The catalysed reaction is an L-alpha-amino acid + O2 + H2O = a 2-oxocarboxylate + H2O2 + NH4(+). It carries out the reaction L-leucine + O2 + H2O = 4-methyl-2-oxopentanoate + H2O2 + NH4(+). The enzyme catalyses L-phenylalanine + O2 + H2O = 3-phenylpyruvate + H2O2 + NH4(+). It catalyses the reaction L-tryptophan + O2 + H2O = indole-3-pyruvate + H2O2 + NH4(+). The catalysed reaction is L-methionine + O2 + H2O = 4-methylsulfanyl-2-oxobutanoate + H2O2 + NH4(+). It carries out the reaction L-isoleucine + O2 + H2O = (S)-3-methyl-2-oxopentanoate + H2O2 + NH4(+). The enzyme catalyses L-arginine + O2 + H2O = 5-guanidino-2-oxopentanoate + H2O2 + NH4(+). It catalyses the reaction L-histidine + O2 + H2O = 3-(imidazol-5-yl)pyruvate + H2O2 + NH4(+). The catalysed reaction is L-asparagine + O2 + H2O = 2-oxosuccinamate + H2O2 + NH4(+). It carries out the reaction L-valine + O2 + H2O = 3-methyl-2-oxobutanoate + H2O2 + NH4(+). The enzyme catalyses L-glutamate + O2 + H2O = H2O2 + 2-oxoglutarate + NH4(+). Catalyzes an oxidative deamination of predominantly hydrophobic and aromatic L-amino acids, thus producing hydrogen peroxide that may contribute to the diverse toxic effects of this enzyme. Is highly active on L-Met, L-Leu, L-Phe, L-Ile, and L-Arg, moderately active on L-His, L-Trp, L-Asn, L-Glu, and L-Val, and weakly or not active on L-Gln, L-Lys, L-Asp, L-Ala, L-Tyr, L-Ser, L-Pro, L-Gly, L-Thr, and L-Cys. Exhibits diverse biological activities, such as hemorrhage, hemolysis, edema, apoptosis of vascular endothelial cells or tumor cell lines, antibacterial and antiparasitic activities. In addition, this protein has an ability to induce apoptosis in cultured HeLa and K562 cells, and inhibits ADP-induced platelet aggregation dose-dependently. Effects of snake L-amino oxidases on platelets are controversial, since they either induce aggregation or inhibit agonist-induced aggregation. These different effects are probably due to different experimental conditions. This chain is L-amino-acid oxidase, found in Vipera berus berus (Common viper).